Here is a 571-residue protein sequence, read N- to C-terminus: Carboxylesterase 3 (571 aa).

The N-terminal stretch at 1-26 is a signal peptide; it reads MERAVRVESGVLVGVVCLLLACPATA. Cys-97 and Cys-124 form a disulfide bridge. An N-linked (GlcNAc...) asparagine glycan is attached at Asn-105. The Acyl-ester intermediate role is filled by Ser-229. Cysteines 281 and 292 form a disulfide. Active-site charge relay system residues include Glu-347 and His-460. A Prevents secretion from ER motif is present at residues 568–571; that stretch reads QEDL.

Belongs to the type-B carboxylesterase/lipase family. Post-translationally, N-glycosylated. As to expression, expressed in liver, colon and small intestine.

The protein resides in the endoplasmic reticulum lumen. It carries out the reaction a carboxylic ester + H2O = an alcohol + a carboxylate + H(+). Functionally, involved in the detoxification of xenobiotics and in the activation of ester and amide prodrugs. Shows low catalytic efficiency for hydrolysis of CPT-11 (7-ethyl-10-[4-(1-piperidino)-1-piperidino]-carbonyloxycamptothecin), a prodrug for camptothecin used in cancer therapeutics. The protein is Carboxylesterase 3 (CES3) of Homo sapiens (Human).